The chain runs to 718 residues: Potassium channel KAT1 (718 aa).

Residues 1-60 (MTQAHSKSCFHQFWDGLQIKRSSDSFTVELLPSLGATINHSNKLQKFIISPYDPRYRSWE) are Cytoplasmic-facing. A helical transmembrane segment spans residues 61-81 (LFLIVLVVYSAWICPFELAFL). The Extracellular segment spans residues 82–88 (RDLPSKL). A helical transmembrane segment spans residues 89–109 (LLVENIVDIFFAIDIVLTFFV). Residues 110-132 (AYVDSKTHLLVDDRKRIAMRYLS) are Cytoplasmic-facing. Residues 133-153 (TWFIFDVCSTAPFQPIILLFT) traverse the membrane as a helical segment. At 154-162 (HKGNDIAFK) the chain is on the extracellular side. A helical; Voltage-sensor membrane pass occupies residues 163 to 183 (VLNLLRLWRLHRVSSLFARLE). Over 184 to 197 (KDIRFNYFWTRCSK) the chain is Cytoplasmic. A helical membrane pass occupies residues 198 to 218 (LISVTLFAVHCAGCFNYMIAD). The Extracellular portion of the chain corresponds to 219–245 (RYPNPEKTWIGAVMSTFRSESLWTRYI). Positions 246-265 (TALYWSITTLTTTGYGDLHA) form an intramembrane region, pore-forming. Topologically, residues 266–269 (ENPT) are extracellular. Residues 270 to 290 (EMLFDIVYMMFNLGLTAYLIG) traverse the membrane as a helical segment. At 291–718 (NMTNLVVHGT…DGDHLFLLEM (428 aa)) the chain is on the cytoplasmic side. Residue 374–493 (LFNGVSGNFI…NILMNNLVQK (120 aa)) coordinates a nucleoside 3',5'-cyclic phosphate. The tract at residues 560–584 (EATRSSASENENSSMTDKEENHDEV) is disordered. A compositionally biased stretch (polar residues) spans 562–574 (TRSSASENENSSM). Over residues 575-584 (TDKEENHDEV) the composition is skewed to basic and acidic residues. The 72-residue stretch at 647–718 (RVTIHKYRHN…DGDHLFLLEM (72 aa)) folds into the KHA domain.

It belongs to the potassium channel family. Plant (TC 1.A.1.4) subfamily.

Its subcellular location is the membrane. In terms of biological role, probable inward-rectifying potassium channel. Assuming opened or closed conformations in response to the voltage difference across the membrane, the channel is activated by hyperpolarization. This Oryza sativa subsp. japonica (Rice) protein is Potassium channel KAT1.